Here is a 92-residue protein sequence, read N- to C-terminus: Parbolysin P7 (92 aa).

Disulfide bonds link C15-C36, C21-C32, and C46-C59.

Belongs to the worm cytolysin family. In terms of tissue distribution, localized within the skin and proboscis and are most readily isolated from body mucus secretions.

It is found in the secreted. Functionally, cytolysin that shows hemolytic activity (on bovine erythrocytes, HC(50)=5.75 mg/ml). This hemolytic activity is completely inhibited by small unilamelar vesicles composed of PC/PG, PC/PI and PC/PS in 1:1 molar ratios (with at least 100 mg/ml concentration). This chain is Parbolysin P7, found in Parborlasia corrugatus (Antarctic nemertean worm).